An 832-amino-acid polypeptide reads, in one-letter code: Protein P (832 aa).

Residues 1–177 (MPLSYQHFRR…FCGSPYSWEQ (177 aa)) form a terminal protein domain (TP) region. The spacer stretch occupies residues 178-335 (ELQHGAESFH…YCLSHIVNLL (158 aa)). Positions 241–263 (RRPFGVEPSGSGHTTNLASKSAS) are disordered. Over residues 251–263 (SGHTTNLASKSAS) the composition is skewed to polar residues. The tract at residues 336–679 (EDWGPCAEHG…YLNLYPVARQ (344 aa)) is polymerase/reverse transcriptase domain (RT). The Reverse transcriptase domain occupies 346-589 (EHHIRIPRTP…YSLHFMGYVI (244 aa)). 3 residues coordinate Mg(2+): D418, D540, and D541.

It belongs to the hepadnaviridae P protein family.

The enzyme catalyses DNA(n) + a 2'-deoxyribonucleoside 5'-triphosphate = DNA(n+1) + diphosphate. It catalyses the reaction Endonucleolytic cleavage to 5'-phosphomonoester.. Activated by host HSP70 and HSP40 in vitro to be able to bind the epsilon loop of the pgRNA. Because deletion of the RNase H region renders the protein partly chaperone-independent, the chaperones may be needed indirectly to relieve occlusion of the RNA-binding site by this domain. Inhibited by several reverse-transcriptase inhibitors: Lamivudine, Adefovir and Entecavir. Multifunctional enzyme that converts the viral RNA genome into dsDNA in viral cytoplasmic capsids. This enzyme displays a DNA polymerase activity that can copy either DNA or RNA templates, and a ribonuclease H (RNase H) activity that cleaves the RNA strand of RNA-DNA heteroduplexes in a partially processive 3'- to 5'-endonucleasic mode. Neo-synthesized pregenomic RNA (pgRNA) are encapsidated together with the P protein, and reverse-transcribed inside the nucleocapsid. Initiation of reverse-transcription occurs first by binding the epsilon loop on the pgRNA genome, and is initiated by protein priming, thereby the 5'-end of (-)DNA is covalently linked to P protein. Partial (+)DNA is synthesized from the (-)DNA template and generates the relaxed circular DNA (RC-DNA) genome. After budding and infection, the RC-DNA migrates in the nucleus, and is converted into a plasmid-like covalently closed circular DNA (cccDNA). The activity of P protein does not seem to be necessary for cccDNA generation, and is presumably released from (+)DNA by host nuclear DNA repair machinery. This chain is Protein P, found in Homo sapiens (Human).